A 28-amino-acid polypeptide reads, in one-letter code: Conotoxin Cl1.2 (28 aa).

Contains 2 disulfide bonds. Expressed by the venom duct.

Its subcellular location is the secreted. The chain is Conotoxin Cl1.2 from Californiconus californicus (California cone).